A 429-amino-acid polypeptide reads, in one-letter code: MSEIVDIYAREILDSRGNPTLEVDVFLESGAFGRAAVPSGASTGEREALELRDGDMARYLGKGVLKAVDNVNNEIADELIGMDADDQVAIDNKMLELDGTEFKSKLGANATLGVSLAVAKAAADEAGLSLHKYIGGAGARELPLPMMNILNGGAHADNNVDIQEFMIMPAGARCFAEALRMGAEIFHALKSVLKGKGYNTSVGDEGGFAPNLKSNEEALQVIMEAIVKAGYKPGEDVLLALDVASSELFKDGIYTLENEQQKQKTAAQLIDFYEDLVNRYPIISIEDGMAENDWDGWKLLTDRLGKRIQIVGDDLFVTNPRILKEGIQKGIANSILVKLNQIGTLTETLEAIEMAKRAGYTTVISHRSGETEDTTLADLAVAVNAGQIKTGSLCRTDRVAKYNQLLRIEEELDDCALFRGHDVFYNLKK.

Gln-163 lines the (2R)-2-phosphoglycerate pocket. Catalysis depends on Glu-205, which acts as the Proton donor. Mg(2+) is bound by residues Asp-242, Glu-286, and Asp-313. Positions 338, 367, 368, and 389 each coordinate (2R)-2-phosphoglycerate. Lys-338 acts as the Proton acceptor in catalysis.

This sequence belongs to the enolase family. Mg(2+) serves as cofactor.

The protein resides in the cytoplasm. It localises to the secreted. Its subcellular location is the cell surface. It catalyses the reaction (2R)-2-phosphoglycerate = phosphoenolpyruvate + H2O. It functions in the pathway carbohydrate degradation; glycolysis; pyruvate from D-glyceraldehyde 3-phosphate: step 4/5. Catalyzes the reversible conversion of 2-phosphoglycerate (2-PG) into phosphoenolpyruvate (PEP). It is essential for the degradation of carbohydrates via glycolysis. The polypeptide is Enolase (Pelobacter propionicus (strain DSM 2379 / NBRC 103807 / OttBd1)).